Consider the following 137-residue polypeptide: Acidic phospholipase A2 PL-I (137 aa).

The first 17 residues, 1–17 (AVCVSLLGASSIRPLPL), serve as a signal peptide directing secretion. Cystine bridges form between Cys28–Cys89, Cys44–Cys136, Cys46–Cys62, Cys61–Cys117, Cys68–Cys110, Cys78–Cys103, and Cys96–Cys108. 3 residues coordinate Ca(2+): Tyr45, Gly47, and Gly49. His65 is an active-site residue. Asp66 lines the Ca(2+) pocket. Asp111 is a catalytic residue.

It depends on Ca(2+) as a cofactor. Expressed by the venom gland.

Its subcellular location is the secreted. It carries out the reaction a 1,2-diacyl-sn-glycero-3-phosphocholine + H2O = a 1-acyl-sn-glycero-3-phosphocholine + a fatty acid + H(+). In terms of biological role, snake venom phospholipase A2 (PLA2) that may act in the hemostasis system of the prey. Exhibits hydrolytic activities, and prefers the anionic micelles (dPPC with deoxycholate) (793 umol/mg/min) to the zwitterionic micelles (dPPC with Triton X-100) (591 umol/mg/min). PLA2 catalyzes the calcium-dependent hydrolysis of the 2-acyl groups in 3-sn-phosphoglycerides. The sequence is that of Acidic phospholipase A2 PL-I from Walterinnesia aegyptia (Desert black snake).